The following is a 203-amino-acid chain: Chromophore lyase CpcT/CpeT 3 (203 aa).

This sequence belongs to the CpcT/CpeT biliprotein lyase family.

In terms of biological role, covalently attaches a chromophore to Cys residue(s) of phycobiliproteins. In Gloeobacter violaceus (strain ATCC 29082 / PCC 7421), this protein is Chromophore lyase CpcT/CpeT 3.